The sequence spans 758 residues: SWR1-complex protein 3 (758 aa).

Residues 1-10 are compositionally biased toward basic residues; sequence MSKKRGRRHT. 3 disordered regions span residues 1-34, 153-253, and 323-577; these read MSKK…DKSR, AKEA…MKAV, and EVTD…EEKA. The stretch at 151-233 forms a coiled coil; sequence NEAKEAKKRD…EKAKAAANTS (83 aa). A compositionally biased stretch (basic and acidic residues) spans 153-174; it reads AKEAKKRDREVRKKQQEEEKRL. Residues 175 to 185 are compositionally biased toward basic residues; that stretch reads KKERKLLRKKL. Positions 186–198 are enriched in basic and acidic residues; sequence KQEALEKEKEKNK. The span at 199–212 shows a compositional bias: basic residues; it reads DKVKKPRKPYKKSA. Residues 213-227 show a composition bias toward basic and acidic residues; that stretch reads KRLEAERLKKEEKAK. Residues 235–253 show a composition bias toward basic residues; the sequence is VKKKISKTSNVKKKKMKAV. Residues 323-335 show a composition bias toward acidic residues; sequence EVTDDGESDEDVK. Over residues 336–345 the composition is skewed to basic and acidic residues; it reads ELEVTEKSED. Positions 351 to 360 are enriched in low complexity; it reads VALPKAAVAA. A compositionally biased stretch (polar residues) spans 388 to 427; that stretch reads DESNAQESTDVNKNQPIQRLNISKNVQSVKNDITENTDLA. Residues 444 to 487 are compositionally biased toward basic and acidic residues; that stretch reads TTEHKPDEKPKDAAMSKSNEKKPDEDTAQDTSKDDENKSDKSDS. The segment covering 488 to 509 has biased composition (acidic residues); sequence DSDSDSDSDNDSSSSDESDNED. Over residues 526–549 the composition is skewed to basic and acidic residues; that stretch reads TSEKADTNTDVSSDKPPDDIKSEG. Residues 555-565 show a composition bias toward basic residues; sequence RVKRKYRRRSK.

This sequence belongs to the SWC3 family. In terms of assembly, component of the SWR1 chromatin remodeling complex.

It localises to the nucleus. In terms of biological role, component of the SWR1 complex which mediates the ATP-dependent exchange of histone H2A for the H2A variant HZT1 leading to transcriptional regulation of selected genes by chromatin remodeling. Involved in chromosome stability. In Kluyveromyces lactis (strain ATCC 8585 / CBS 2359 / DSM 70799 / NBRC 1267 / NRRL Y-1140 / WM37) (Yeast), this protein is SWR1-complex protein 3 (SWC3).